The chain runs to 422 residues: uncharacterized protein (422 aa).

Ser-124, Ser-126, and Ser-151 each carry phosphoserine. Positions 144–166 (TNSLNHDSPPSTPPRRPDTSTSK) are disordered. Lys-250 participates in a covalent cross-link: Glycyl lysine isopeptide (Lys-Gly) (interchain with G-Cter in SUMO2). Disordered stretches follow at residues 251-285 (ADTT…NDSS) and 299-324 (GRGP…ATTA). Residues 271–282 (ETDEDLAWDSDN) are compositionally biased toward acidic residues. 2 positions are modified to phosphoserine: Ser-280 and Ser-306. Positions 310 to 324 (ALTVKAKATSSATTA) are enriched in low complexity. Phosphoserine is present on Ser-351.

This is an uncharacterized protein from Homo sapiens (Human).